Consider the following 323-residue polypeptide: Forkhead transcription factor fkh-6 (323 aa).

Positions 21-122 form a DNA-binding region, fork-head; sequence KPPYSYVALI…DNGNFKRRRV (102 aa).

It localises to the nucleus. Its function is as follows. Probable transcription factor. Binds to the DNA sequence motif 5'-[TA]TGTT[TG]T[TG][ATG]TT-3'. Regulates sexual dimorphism in the gonad, promoting male gonadal cell fates in chromosomally (XO) male animals, yet plays a role in gonadogenesis in both sexes; probably acts downstream of terminal regulator of sex determination tra-1, to control early gonadogenesis. Positively modulates expression of homeobox protein egl-5, probably acting indirectly, during early gonadal development. The protein is Forkhead transcription factor fkh-6 of Caenorhabditis elegans.